A 176-amino-acid chain; its full sequence is Small ribosomal subunit protein uS8c (176 aa).

The protein belongs to the universal ribosomal protein uS8 family. Part of the 30S ribosomal subunit.

Its subcellular location is the plastid. The protein localises to the chloroplast. Its function is as follows. One of the primary rRNA binding proteins, it binds directly to 16S rRNA central domain where it helps coordinate assembly of the platform of the 30S subunit. The protein is Small ribosomal subunit protein uS8c (rps8) of Stigeoclonium helveticum (Green alga).